The following is a 288-amino-acid chain: Pyridoxal kinase PdxY (288 aa).

Residues serine 12 and 47–48 (TQ) each bind substrate. Residues aspartate 114, glutamate 151, lysine 184, and 211-214 (RPLL) each bind ATP. Aspartate 225 contributes to the substrate binding site.

The protein belongs to the pyridoxine kinase family. PdxY subfamily. Homodimer. Mg(2+) is required as a cofactor.

It carries out the reaction pyridoxal + ATP = pyridoxal 5'-phosphate + ADP + H(+). The protein operates within cofactor metabolism; pyridoxal 5'-phosphate salvage; pyridoxal 5'-phosphate from pyridoxal: step 1/1. Functionally, pyridoxal kinase involved in the salvage pathway of pyridoxal 5'-phosphate (PLP). Catalyzes the phosphorylation of pyridoxal to PLP. This Pseudomonas paraeruginosa (strain DSM 24068 / PA7) (Pseudomonas aeruginosa (strain PA7)) protein is Pyridoxal kinase PdxY.